We begin with the raw amino-acid sequence, 400 residues long: Elongation factor Tu (400 aa).

The 200-residue stretch at 10-209 folds into the tr-type G domain; that stretch reads KPHVNVGTIG…AVDSYIPTPE (200 aa). Residues 19 to 26 form a G1 region; the sequence is GHVDHGKT. 19-26 is a binding site for GTP; it reads GHVDHGKT. Threonine 26 is a Mg(2+) binding site. The tract at residues 60-64 is G2; sequence GITIA. The tract at residues 81–84 is G3; it reads DCPG. GTP is bound by residues 81-85 and 136-139; these read DCPGH and NKVD. A G4 region spans residues 136–139; the sequence is NKVD. Residues 174 to 176 form a G5 region; it reads SAL.

It belongs to the TRAFAC class translation factor GTPase superfamily. Classic translation factor GTPase family. EF-Tu/EF-1A subfamily. As to quaternary structure, monomer.

The protein resides in the cytoplasm. The enzyme catalyses GTP + H2O = GDP + phosphate + H(+). Its function is as follows. GTP hydrolase that promotes the GTP-dependent binding of aminoacyl-tRNA to the A-site of ribosomes during protein biosynthesis. This is Elongation factor Tu from Moorella thermoacetica (strain ATCC 39073 / JCM 9320).